The chain runs to 244 residues: Ribosome-inactivating protein cucurmosin (244 aa).

Catalysis depends on residues Y70, Y109, E158, and R161. 2 N-linked (GlcNAc...) asparagine glycosylation sites follow: N189 and N225.

The protein belongs to the ribosome-inactivating protein family. Type 1 RIP subfamily. The N-linked glycan consists of GlcNAc2Man3Xyl.

It carries out the reaction Endohydrolysis of the N-glycosidic bond at one specific adenosine on the 28S rRNA.. Functionally, has cytotoxic activity towards cancer cells, but not normal cells. Inhibits the growth of the human leukemia cell line K562, the murine melanoma cell line B16 and the lung adenocarcinoma cell line A549 with IC(50) values of 88.1 nM, 63.4 nM and 359.3 nM respectively. The polypeptide is Ribosome-inactivating protein cucurmosin (Cucurbita moschata (Winter crookneck squash)).